The sequence spans 65 residues: Protein C13 (65 aa).

Belongs to the poxviridae C13 protein family.

The protein is Protein C13 of Vaccinia virus (strain Copenhagen) (VACV).